A 243-amino-acid chain; its full sequence is rRNA adenine N-6-methyltransferase (243 aa).

Positions 11, 13, 38, 59, 84, and 101 each coordinate S-adenosyl-L-methionine.

The protein belongs to the class I-like SAM-binding methyltransferase superfamily. rRNA adenine N(6)-methyltransferase family.

It carries out the reaction adenosine(2085) in 23S rRNA + 2 S-adenosyl-L-methionine = N(6)-dimethyladenosine(2085) in 23S rRNA + 2 S-adenosyl-L-homocysteine + 2 H(+). Its function is as follows. This protein produces a dimethylation of the adenine residue at position 2085 in 23S rRNA, resulting in reduced affinity between ribosomes and macrolide-lincosamide-streptogramin B antibiotics. The sequence is that of rRNA adenine N-6-methyltransferase (ermA1) from Staphylococcus aureus (strain Mu50 / ATCC 700699).